The sequence spans 503 residues: Na(+)-translocating NADH-quinone reductase subunit B (503 aa).

4 helical membrane passes run 55–75 (MMLVVIALFPATFLAIWNSGI), 120–140 (IFLPLLIISYTVGGACEVLFA), 161–181 (TLPPTIPYWMAALGIAFGVVV), and 186–206 (FGGTGMNILNPALSGRAFLFF). FMN phosphoryl threonine is present on Thr-248. 5 helical membrane-spanning segments follow: residues 361–381 (TSTFACLLGAVFLVITGIASW), 387–407 (FGIGAFVTAWLFKICSILIAG), 417–437 (FFIPAYRQLFLGGLAFGLVFM), 452–472 (WIYGLFIGFMTIIIRLINPAY), and 475–495 (GVMLAILLGNVFAPLLDYFAV).

The protein belongs to the NqrB/RnfD family. Composed of six subunits; NqrA, NqrB, NqrC, NqrD, NqrE and NqrF. It depends on FMN as a cofactor.

It is found in the cell inner membrane. It carries out the reaction a ubiquinone + n Na(+)(in) + NADH + H(+) = a ubiquinol + n Na(+)(out) + NAD(+). In terms of biological role, NQR complex catalyzes the reduction of ubiquinone-1 to ubiquinol by two successive reactions, coupled with the transport of Na(+) ions from the cytoplasm to the periplasm. NqrA to NqrE are probably involved in the second step, the conversion of ubisemiquinone to ubiquinol. The polypeptide is Na(+)-translocating NADH-quinone reductase subunit B (Chlamydia abortus (strain DSM 27085 / S26/3) (Chlamydophila abortus)).